The following is a 277-amino-acid chain: Glutamate racemase (277 aa).

Residues 13 to 14 (DS) and 45 to 46 (YG) each bind substrate. The active-site Proton donor/acceptor is C76. 77–78 (NT) contacts substrate. The active-site Proton donor/acceptor is C186. Substrate is bound at residue 187–188 (TH).

This sequence belongs to the aspartate/glutamate racemases family.

The enzyme catalyses L-glutamate = D-glutamate. The protein operates within cell wall biogenesis; peptidoglycan biosynthesis. In terms of biological role, provides the (R)-glutamate required for cell wall biosynthesis. This Ralstonia nicotianae (strain ATCC BAA-1114 / GMI1000) (Ralstonia solanacearum) protein is Glutamate racemase.